A 48-amino-acid chain; its full sequence is Large ribosomal subunit protein bL32 (48 aa).

Residues 1-20 (MAVPKRRVSKTRAAKRRTHY) are compositionally biased toward basic residues. The disordered stretch occupies residues 1 to 48 (MAVPKRRVSKTRAAKRRTHYKVSLPMPIKDKDGSYKMPHRANPTTKEY).

It belongs to the bacterial ribosomal protein bL32 family.

This is Large ribosomal subunit protein bL32 (rpmF) from Campylobacter jejuni subsp. jejuni serotype O:2 (strain ATCC 700819 / NCTC 11168).